We begin with the raw amino-acid sequence, 186 residues long: uncharacterized protein (186 aa).

3 helical membrane passes run 42-62 (ISIA…LSVL), 80-100 (LLFL…IGLV), and 131-151 (ICGI…FIVL).

This sequence to U.parvum UU008, UU041 and UU042.

It is found in the cell membrane. This is an uncharacterized protein from Ureaplasma parvum serovar 3 (strain ATCC 700970).